The sequence spans 393 residues: Glutamate 5-kinase 1 (393 aa).

An ATP-binding site is contributed by lysine 17. Serine 57, aspartate 144, and asparagine 156 together coordinate substrate. 176–177 (SD) provides a ligand contact to ATP. A PUA domain is found at 282 to 359 (AGSLSIDAGA…AEIAAILGYA (78 aa)).

Belongs to the glutamate 5-kinase family.

The protein resides in the cytoplasm. It catalyses the reaction L-glutamate + ATP = L-glutamyl 5-phosphate + ADP. The protein operates within amino-acid biosynthesis; L-proline biosynthesis; L-glutamate 5-semialdehyde from L-glutamate: step 1/2. Catalyzes the transfer of a phosphate group to glutamate to form L-glutamate 5-phosphate. The sequence is that of Glutamate 5-kinase 1 from Rhizobium meliloti (strain 1021) (Ensifer meliloti).